Here is a 182-residue protein sequence, read N- to C-terminus: ATP synthase subunit b 1 (182 aa).

A helical membrane pass occupies residues 24 to 44; sequence FADPAFWVSIAFLMVVGFVYI.

It belongs to the ATPase B chain family. In terms of assembly, F-type ATPases have 2 components, F(1) - the catalytic core - and F(0) - the membrane proton channel. F(1) has five subunits: alpha(3), beta(3), gamma(1), delta(1), epsilon(1). F(0) has three main subunits: a(1), b(2) and c(10-14). The alpha and beta chains form an alternating ring which encloses part of the gamma chain. F(1) is attached to F(0) by a central stalk formed by the gamma and epsilon chains, while a peripheral stalk is formed by the delta and b chains.

Its subcellular location is the cell inner membrane. Functionally, f(1)F(0) ATP synthase produces ATP from ADP in the presence of a proton or sodium gradient. F-type ATPases consist of two structural domains, F(1) containing the extramembraneous catalytic core and F(0) containing the membrane proton channel, linked together by a central stalk and a peripheral stalk. During catalysis, ATP synthesis in the catalytic domain of F(1) is coupled via a rotary mechanism of the central stalk subunits to proton translocation. Its function is as follows. Component of the F(0) channel, it forms part of the peripheral stalk, linking F(1) to F(0). The chain is ATP synthase subunit b 1 from Rhodospirillum rubrum (strain ATCC 11170 / ATH 1.1.1 / DSM 467 / LMG 4362 / NCIMB 8255 / S1).